The sequence spans 185 residues: Phospholipase A2 inhibitor 25 kDa subunit (185 aa).

8 disulfides stabilise this stretch: C3–C27, C6–C13, C20–C48, C54–C75, C76–C81, C101–C126, C119–C146, and C152–C172.

It belongs to the CNF-like-inhibitor family. As to quaternary structure, heterodimer with phospholipase A2 inhibitor 31 kDa. Expressed by the liver.

The protein resides in the secreted. Its function is as follows. Inhibits the enzymatic activity of phospholipase A2. This Naja kaouthia (Monocled cobra) protein is Phospholipase A2 inhibitor 25 kDa subunit.